Reading from the N-terminus, the 182-residue chain is Oligoribonuclease (182 aa).

The Exonuclease domain occupies 8–171; that stretch reads LLWLDMEMTG…ADIYESIDEL (164 aa). Y129 is an active-site residue.

This sequence belongs to the oligoribonuclease family.

The protein localises to the cytoplasm. Its function is as follows. 3'-to-5' exoribonuclease specific for small oligoribonucleotides. The polypeptide is Oligoribonuclease (Thiobacillus denitrificans (strain ATCC 25259 / T1)).